A 99-amino-acid chain; its full sequence is DNA-directed RNA polymerase subunit omega (99 aa).

The protein belongs to the RNA polymerase subunit omega family. As to quaternary structure, the RNAP catalytic core consists of 2 alpha, 1 beta, 1 beta' and 1 omega subunit. When a sigma factor is associated with the core the holoenzyme is formed, which can initiate transcription.

It carries out the reaction RNA(n) + a ribonucleoside 5'-triphosphate = RNA(n+1) + diphosphate. Its function is as follows. Promotes RNA polymerase assembly. Latches the N- and C-terminal regions of the beta' subunit thereby facilitating its interaction with the beta and alpha subunits. This is DNA-directed RNA polymerase subunit omega from Xylella fastidiosa (strain Temecula1 / ATCC 700964).